A 173-amino-acid chain; its full sequence is RNA pyrophosphohydrolase (173 aa).

Residues 11-164 (PYRKCVGILV…KKHVYTQVVK (154 aa)) form the Nudix hydrolase domain. The Nudix box motif lies at 52–73 (GGINQGEKPIDAARRELYEETG).

This sequence belongs to the Nudix hydrolase family. RppH subfamily. A divalent metal cation serves as cofactor.

Accelerates the degradation of transcripts by removing pyrophosphate from the 5'-end of triphosphorylated RNA, leading to a more labile monophosphorylated state that can stimulate subsequent ribonuclease cleavage. The protein is RNA pyrophosphohydrolase of Bartonella clarridgeiae.